Consider the following 92-residue polypeptide: MAVKIRLTRLGSKRNPFYRIVVADARSPRDGRIIEQIGTYNPVDNSGENKVTIDEELALKWLKDGAKPTDTVHNILSREGILKTFDEQRHSK.

Belongs to the bacterial ribosomal protein bS16 family.

The sequence is that of Small ribosomal subunit protein bS16 from Staphylococcus carnosus (strain TM300).